A 634-amino-acid chain; its full sequence is DNA mismatch repair protein MutL (634 aa).

Residues 406–427 (HTHHNDTKGSVHTKSFSARSSS) are disordered.

The protein belongs to the DNA mismatch repair MutL/HexB family.

Its function is as follows. This protein is involved in the repair of mismatches in DNA. It is required for dam-dependent methyl-directed DNA mismatch repair. May act as a 'molecular matchmaker', a protein that promotes the formation of a stable complex between two or more DNA-binding proteins in an ATP-dependent manner without itself being part of a final effector complex. In Anaplasma phagocytophilum (strain HZ), this protein is DNA mismatch repair protein MutL.